A 164-amino-acid polypeptide reads, in one-letter code: Mineralocorticoid receptor (164 aa).

One can recognise an NR LBD domain in the interval 1–162; that stretch reads QYSWMCLSSF…EFPRCWWRSS (162 aa). 21-hydroxyprogesterone is bound by residues arginine 15 and threonine 143. Aldosterone contacts are provided by arginine 15 and threonine 143. The progesterone site is built by arginine 15 and threonine 143.

It belongs to the nuclear hormone receptor family. NR3 subfamily. As to quaternary structure, heteromultimeric cytoplasmic complex with HSP90, HSP70, and FKBP4, in the absence of ligand. After ligand binding, it translocates to the nucleus and binds to DNA as a homodimer and as a heterodimer with NR3C1. Binds the coactivator NCOA2. May interact with HSD11B2 in the absence of ligand. Binds the coactivators NCOA1, TIF1 and NRIP1. Post-translationally, phosphorylated.

The protein localises to the cytoplasm. It is found in the nucleus. The protein resides in the endoplasmic reticulum membrane. Its function is as follows. Receptor for both mineralocorticoids (MC) such as aldosterone and glucocorticoids (GC) such as corticosterone or cortisol. Binds to mineralocorticoid response elements (MRE) and transactivates target genes. The effect of MC is to increase ion and water transport and thus raise extracellular fluid volume and blood pressure and lower potassium levels. The protein is Mineralocorticoid receptor (NR3C2) of Sus scrofa (Pig).